We begin with the raw amino-acid sequence, 390 residues long: 1-deoxy-D-xylulose 5-phosphate reductoisomerase (390 aa).

NADPH is bound by residues Thr-10, Gly-11, Ser-12, Ile-13, Ala-36, Lys-37, Asn-38, and Asn-122. Residue Lys-123 participates in 1-deoxy-D-xylulose 5-phosphate binding. Position 124 (Glu-124) interacts with NADPH. Position 148 (Asp-148) interacts with Mn(2+). Residues Ser-149, Glu-150, Ser-174, and His-197 each contribute to the 1-deoxy-D-xylulose 5-phosphate site. Glu-150 is a binding site for Mn(2+). Gly-203 is a binding site for NADPH. Residues Ser-210, Asn-215, Lys-216, and Glu-219 each contribute to the 1-deoxy-D-xylulose 5-phosphate site. Glu-219 serves as a coordination point for Mn(2+).

This sequence belongs to the DXR family. Mg(2+) is required as a cofactor. The cofactor is Mn(2+).

The enzyme catalyses 2-C-methyl-D-erythritol 4-phosphate + NADP(+) = 1-deoxy-D-xylulose 5-phosphate + NADPH + H(+). It functions in the pathway isoprenoid biosynthesis; isopentenyl diphosphate biosynthesis via DXP pathway; isopentenyl diphosphate from 1-deoxy-D-xylulose 5-phosphate: step 1/6. Functionally, catalyzes the NADPH-dependent rearrangement and reduction of 1-deoxy-D-xylulose-5-phosphate (DXP) to 2-C-methyl-D-erythritol 4-phosphate (MEP). This chain is 1-deoxy-D-xylulose 5-phosphate reductoisomerase, found in Trichlorobacter lovleyi (strain ATCC BAA-1151 / DSM 17278 / SZ) (Geobacter lovleyi).